The following is a 664-amino-acid chain: Protein-arginine deiminase type-3 (664 aa).

It belongs to the protein arginine deiminase family. Ca(2+) is required as a cofactor. In terms of tissue distribution, epidermis and hair follicles.

It is found in the cytoplasm. The catalysed reaction is L-arginyl-[protein] + H2O = L-citrullyl-[protein] + NH4(+). In terms of biological role, catalyzes the deimination of arginine residues of proteins. In Mus musculus (Mouse), this protein is Protein-arginine deiminase type-3 (Padi3).